The sequence spans 109 residues: Nucleoid-associated protein BUsg_467 (109 aa).

The protein belongs to the YbaB/EbfC family. In terms of assembly, homodimer.

The protein localises to the cytoplasm. The protein resides in the nucleoid. Binds to DNA and alters its conformation. May be involved in regulation of gene expression, nucleoid organization and DNA protection. The polypeptide is Nucleoid-associated protein BUsg_467 (Buchnera aphidicola subsp. Schizaphis graminum (strain Sg)).